Reading from the N-terminus, the 100-residue chain is MEPVNPSLEPWKHPGSQPKTACTNCYCKKCCFHCQACFITKGLGISYGRKKRRQRRRPPQDSQTHQVSLSKPSSQPRGDPTGPKEQKKKVERETETDPVH.

Residues 1–20 are disordered; the sequence is MEPVNPSLEPWKHPGSQPKT. Residues 1–24 form an interaction with human CREBBP region; that stretch reads MEPVNPSLEPWKHPGSQPKTACTN. The transactivation stretch occupies residues 1–48; the sequence is MEPVNPSLEPWKHPGSQPKTACTNCYCKKCCFHCQACFITKGLGISYG. Cys-22, Cys-25, and Cys-27 together coordinate Zn(2+). Positions 22–37 are cysteine-rich; it reads CTNCYCKKCCFHCQAC. An N6-acetyllysine; by host PCAF modification is found at Lys-28. Cys-30, His-33, Cys-34, and Cys-37 together coordinate Zn(2+). Residues 38-48 are core; it reads FITKGLGISYG. The segment at 47–100 is disordered; that stretch reads YGRKKRRQRRRPPQDSQTHQVSLSKPSSQPRGDPTGPKEQKKKVERETETDPVH. A compositionally biased stretch (basic residues) spans 48–57; it reads GRKKRRQRRR. Positions 49–57 match the Nuclear localization signal, RNA-binding (TAR), and protein transduction motif; the sequence is RKKRRQRRR. The interval 49–85 is interaction with the host capping enzyme RNGTT; that stretch reads RKKRRQRRRPPQDSQTHQVSLSKPSSQPRGDPTGPKE. Lys-50 and Lys-51 each carry N6-acetyllysine; by host EP300 and GCN5L2. An asymmetric dimethylarginine; by host PRMT6 mark is found at Arg-52 and Arg-53. Polar residues predominate over residues 61-76; it reads DSQTHQVSLSKPSSQP. Residue Lys-71 forms a Glycyl lysine isopeptide (Lys-Gly) (interchain with G-Cter in ubiquitin) linkage. The Cell attachment site signature appears at 77 to 79; it reads RGD. Positions 82-100 are enriched in basic and acidic residues; sequence GPKEQKKKVERETETDPVH.

The protein belongs to the lentiviruses Tat family. In terms of assembly, interacts with host CCNT1. Associates with the P-TEFb complex composed at least of Tat, P-TEFb (CDK9 and CCNT1), TAR RNA, RNA Pol II. Recruits the HATs CREBBP, TAF1/TFIID, EP300, PCAF and GCN5L2. Interacts with host KAT5/Tip60; this interaction targets the latter to degradation. Interacts with the host deacetylase SIRT1. Interacts with host capping enzyme RNGTT; this interaction stimulates RNGTT. Binds to host KDR, and to the host integrins ITGAV/ITGB3 and ITGA5/ITGB1. Interacts with host KPNB1/importin beta-1 without previous binding to KPNA1/importin alpha-1. Interacts with EIF2AK2. Interacts with host nucleosome assembly protein NAP1L1; this interaction may be required for the transport of Tat within the nucleus, since the two proteins interact at the nuclear rim. Interacts with host C1QBP/SF2P32; this interaction involves lysine-acetylated Tat. Interacts with the host chemokine receptors CCR2, CCR3 and CXCR4. Interacts with host DPP4/CD26; this interaction may trigger an anti-proliferative effect. Interacts with host LDLR. Interacts with the host extracellular matrix metalloproteinase MMP1. Interacts with host PRMT6; this interaction mediates Tat's methylation. Interacts with, and is ubiquitinated by MDM2/Hdm2. Interacts with host PSMC3 and HTATIP2. Interacts with STAB1; this interaction may overcome SATB1-mediated repression of IL2 and IL2RA (interleukin) in T cells by binding to the same domain than HDAC1. Interacts (when acetylated) with human CDK13, thereby increasing HIV-1 mRNA splicing and promoting the production of the doubly spliced HIV-1 protein Nef. Interacts with host TBP; this interaction modulates the activity of transcriptional pre-initiation complex. Interacts with host RELA. Interacts with host PLSCR1; this interaction negatively regulates Tat transactivation activity by altering its subcellular distribution. Asymmetrical arginine methylation by host PRMT6 seems to diminish the transactivation capacity of Tat and affects the interaction with host CCNT1. Post-translationally, acetylation by EP300, CREBBP, GCN5L2/GCN5 and PCAF regulates the transactivation activity of Tat. EP300-mediated acetylation of Lys-50 promotes dissociation of Tat from the TAR RNA through the competitive binding to PCAF's bromodomain. In addition, the non-acetylated Tat's N-terminus can also interact with PCAF. PCAF-mediated acetylation of Lys-28 enhances Tat's binding to CCNT1. Lys-50 is deacetylated by SIRT1. In terms of processing, polyubiquitination by host MDM2 does not target Tat to degradation, but activates its transactivation function and fosters interaction with CCNT1 and TAR RNA. Phosphorylated by EIF2AK2 on serine and threonine residues adjacent to the basic region important for TAR RNA binding and function. Phosphorylation of Tat by EIF2AK2 is dependent on the prior activation of EIF2AK2 by dsRNA.

It localises to the host nucleus. The protein localises to the host nucleolus. Its subcellular location is the host cytoplasm. The protein resides in the secreted. In terms of biological role, transcriptional activator that increases RNA Pol II processivity, thereby increasing the level of full-length viral transcripts. Recognizes a hairpin structure at the 5'-LTR of the nascent viral mRNAs referred to as the transactivation responsive RNA element (TAR) and recruits the cyclin T1-CDK9 complex (P-TEFb complex) that will in turn hyperphosphorylate the RNA polymerase II to allow efficient elongation. The CDK9 component of P-TEFb and other Tat-activated kinases hyperphosphorylate the C-terminus of RNA Pol II that becomes stabilized and much more processive. Other factors such as HTATSF1/Tat-SF1, SUPT5H/SPT5, and HTATIP2 are also important for Tat's function. Besides its effect on RNA Pol II processivity, Tat induces chromatin remodeling of proviral genes by recruiting the histone acetyltransferases (HATs) CREBBP, EP300 and PCAF to the chromatin. This also contributes to the increase in proviral transcription rate, especially when the provirus integrates in transcriptionally silent region of the host genome. To ensure maximal activation of the LTR, Tat mediates nuclear translocation of NF-kappa-B by interacting with host RELA. Through its interaction with host TBP, Tat may also modulate transcription initiation. Tat can reactivate a latently infected cell by penetrating in it and transactivating its LTR promoter. In the cytoplasm, Tat is thought to act as a translational activator of HIV-1 mRNAs. Extracellular circulating Tat can be endocytosed by surrounding uninfected cells via the binding to several surface receptors such as CD26, CXCR4, heparan sulfate proteoglycans (HSPG) or LDLR. Neurons are rarely infected, but they internalize Tat via their LDLR. Through its interaction with nuclear HATs, Tat is potentially able to control the acetylation-dependent cellular gene expression. Modulates the expression of many cellular genes involved in cell survival, proliferation or in coding for cytokines or cytokine receptors. Tat plays a role in T-cell and neurons apoptosis. Tat induced neurotoxicity and apoptosis probably contribute to neuroAIDS. Circulating Tat also acts as a chemokine-like and/or growth factor-like molecule that binds to specific receptors on the surface of the cells, affecting many cellular pathways. In the vascular system, Tat binds to ITGAV/ITGB3 and ITGA5/ITGB1 integrins dimers at the surface of endothelial cells and competes with bFGF for heparin-binding sites, leading to an excess of soluble bFGF. The polypeptide is Protein Tat (Homo sapiens (Human)).